A 1094-amino-acid chain; its full sequence is RecBCD enzyme subunit RecB (1094 aa).

Residues 1-326 enclose the UvrD-like helicase ATP-binding domain; sequence MDRFELLGPL…YTLGVNWRSD (326 aa). The interval 1-713 is DNA-binding and helicase activity, interacts with RecC; it reads MDRFELLGPL…LLRGRRPGQS (713 aa). 21 to 28 serves as a coordination point for ATP; that stretch reads ASAGTGKT. Residues 357 to 613 form the UvrD-like helicase C-terminal domain; sequence AGHRLASAPR…QIMTVFVAKG (257 aa). The tract at residues 775–1094 is nuclease activity, interacts with RecD and RecA; that stretch reads TWRRTSYSDL…DLLDRGRLQS (320 aa). Residues His838, Asp975, and Asp989 each contribute to the Mg(2+) site. Residue Asp989 is the For nuclease activity of the active site.

It belongs to the helicase family. UvrD subfamily. In terms of assembly, heterotrimer of RecB, RecC and RecD. All subunits contribute to DNA-binding. Interacts with RecA. The cofactor is Mg(2+).

The catalysed reaction is Exonucleolytic cleavage (in the presence of ATP) in either 5'- to 3'- or 3'- to 5'-direction to yield 5'-phosphooligonucleotides.. It carries out the reaction Couples ATP hydrolysis with the unwinding of duplex DNA by translocating in the 3'-5' direction.. It catalyses the reaction ATP + H2O = ADP + phosphate + H(+). A helicase/nuclease that prepares dsDNA breaks (DSB) for recombinational DNA repair. Binds to DSBs and unwinds DNA via a highly rapid and processive ATP-dependent bidirectional helicase activity. In the holoenzyme this subunit contributes ATPase, 3'-5' helicase, exonuclease activity and loads RecA onto ssDNA. Unlike the case in E.coli, suppresses RecA-dependent homologous recombination, is instead required for single-strand annealing pathway repair of DSB. This is RecBCD enzyme subunit RecB from Mycobacterium tuberculosis (strain CDC 1551 / Oshkosh).